An 874-amino-acid chain; its full sequence is Translation initiation factor IF-2 (874 aa).

The tract at residues methionine 1 to serine 262 is disordered. Residues serine 54–leucine 63 are compositionally biased toward pro residues. Over residues alanine 83–arginine 104 the composition is skewed to basic and acidic residues. The segment covering serine 141 to glycine 222 has biased composition (gly residues). Positions leucine 235 to threonine 244 are enriched in polar residues. Positions histidine 250–serine 262 are enriched in basic and acidic residues. The 170-residue stretch at asparagine 369 to lysine 538 folds into the tr-type G domain. The interval glycine 378–threonine 385 is G1. Glycine 378 to threonine 385 contacts GTP. The G2 stretch occupies residues glycine 403 to histidine 407. Residues aspartate 424 to glycine 427 are G3. GTP-binding positions include aspartate 424–histidine 428 and asparagine 478–aspartate 481. Residues asparagine 478–aspartate 481 form a G4 region. Positions serine 514–arginine 516 are G5.

The protein belongs to the TRAFAC class translation factor GTPase superfamily. Classic translation factor GTPase family. IF-2 subfamily.

Its subcellular location is the cytoplasm. Its function is as follows. One of the essential components for the initiation of protein synthesis. Protects formylmethionyl-tRNA from spontaneous hydrolysis and promotes its binding to the 30S ribosomal subunits. Also involved in the hydrolysis of GTP during the formation of the 70S ribosomal complex. The sequence is that of Translation initiation factor IF-2 from Leptospira interrogans serogroup Icterohaemorrhagiae serovar copenhageni (strain Fiocruz L1-130).